We begin with the raw amino-acid sequence, 128 residues long: Insulin-like 3 (128 aa).

A signal peptide spans 1 to 15; the sequence is MHALLLLLLLALGSA. 3 cysteine pairs are disulfide-bonded: Cys29-Cys113, Cys41-Cys126, and Cys112-Cys117. The segment covering 81-94 has biased composition (low complexity); that stretch reads ALDPDPALDPQLPH. The interval 81–101 is disordered; that stretch reads ALDPDPALDPQLPHQASQRQR.

Belongs to the insulin family. In terms of assembly, heterodimer of a B chain and an A chain linked by two disulfide bonds. In terms of tissue distribution, expressed in Leydig cells of the testis, and weakly in the theca interna cells of antral follicles and the corpus luteum of the ovary.

Its subcellular location is the secreted. Its function is as follows. Seems to play a role in testicular function. May be a trophic hormone with a role in testicular descent in fetal life. Is a ligand for LGR8 receptor. This chain is Insulin-like 3 (Insl3), found in Rattus norvegicus (Rat).